The primary structure comprises 512 residues: FAD-linked oxidoreductase iacH (512 aa).

The signal sequence occupies residues methionine 1 to glycine 22. N-linked (GlcNAc...) asparagine glycans are attached at residues asparagine 39, asparagine 55, asparagine 69, asparagine 210, asparagine 217, asparagine 278, asparagine 295, and asparagine 367. One can recognise an FAD-binding PCMH-type domain in the interval leucine 77–glycine 248.

The protein belongs to the oxygen-dependent FAD-linked oxidoreductase family. FAD is required as a cofactor.

It participates in secondary metabolite biosynthesis. Its function is as follows. FAD-linked oxidoreductase; part of the gene cluster that mediates the biosynthesis of iso-A82775C, a enylepoxycyclohexane and biosynthetic precursor of the chloropestolide anticancer natural products. Within the cluster, the prenyltransferase iacE prenylates siccayne to generate pestalodiol E, using dimethylallyl diphosphate (DMAPP) as cosubstrate. The probable oxidoreductase iacF is then involved in the epoxidation of pestalodiol F to pestalodiol F, which is further converted to pestalofone A by the short-chain dehydrogenase/reductase iacG. Iso-A82775C is subsequently generated from pestalofone A by the short-chain dehydrogenase/reductase iacC. Iso-A82775C is further condensed with maldoxin via a Diels-Alder reaction to produce the anticancer natural products chloropestolides A to E. This chain is FAD-linked oxidoreductase iacH, found in Pestalotiopsis fici (strain W106-1 / CGMCC3.15140).